A 492-amino-acid polypeptide reads, in one-letter code: Fascin-2 (492 aa).

The protein belongs to the fascin family. As to expression, exclusively expressed in the eye, specifically in photoreceptor cells.

The protein resides in the cytoplasm. The protein localises to the cytoskeleton. It is found in the cell projection. Its subcellular location is the stereocilium. In terms of biological role, acts as an actin bundling protein. May play a pivotal role in photoreceptor cell-specific events, such as disk morphogenesis. This Bos taurus (Bovine) protein is Fascin-2 (FSCN2).